The chain runs to 372 residues: Cytochrome b (372 aa).

The next 4 membrane-spanning stretches (helical) occupy residues 25-45 (FGSMLLTCLILQIMTGFFLAI), 69-90 (WIMQNLHAIGASLFFICIYIHI), 105-125 (WLSGTTLLIILMATAFFGYVL), and 170-190 (FFALHFILPFTIISLSSIHII). Heme b is bound by residues His75 and His89. Positions 174 and 188 each coordinate heme b. His193 provides a ligand contact to a ubiquinone. The next 4 helical transmembrane spans lie at 218 to 238 (YKDMLMIIIMTAILFLILSFS), 280 to 300 (LGGTLALVMSVMILTTAPFTH), 312 to 332 (LSQIVFWTLIATFITITWTAT), and 339 to 358 (FISISQTASIFYFSFFIMNP).

It belongs to the cytochrome b family. In terms of assembly, the cytochrome bc1 complex contains 3 respiratory subunits (MT-CYB, CYC1 and UQCRFS1), 2 core proteins (UQCRC1 and UQCRC2) and probably 6 low-molecular weight proteins. The cofactor is heme b.

The protein resides in the mitochondrion inner membrane. Component of the ubiquinol-cytochrome c reductase complex (complex III or cytochrome b-c1 complex) that is part of the mitochondrial respiratory chain. The b-c1 complex mediates electron transfer from ubiquinol to cytochrome c. Contributes to the generation of a proton gradient across the mitochondrial membrane that is then used for ATP synthesis. This chain is Cytochrome b (MT-CYB), found in Walterinnesia aegyptia (Desert black snake).